Here is a 413-residue protein sequence, read N- to C-terminus: Aspartate aminotransferase, cytoplasmic (413 aa).

2 residues coordinate L-aspartate: glycine 39 and tryptophan 141. Serine 149 carries the phosphoserine modification. Asparagine 195 contributes to the L-aspartate binding site. Lysine 259 bears the N6-(pyridoxal phosphate)lysine mark. An L-aspartate-binding site is contributed by arginine 387.

The protein belongs to the class-I pyridoxal-phosphate-dependent aminotransferase family. As to quaternary structure, homodimer. Pyridoxal 5'-phosphate serves as cofactor.

The protein localises to the cytoplasm. The enzyme catalyses L-aspartate + 2-oxoglutarate = oxaloacetate + L-glutamate. The catalysed reaction is L-cysteine + 2-oxoglutarate = 2-oxo-3-sulfanylpropanoate + L-glutamate. It carries out the reaction (2S)-2-aminobutanoate + 2-oxoglutarate = 2-oxobutanoate + L-glutamate. It catalyses the reaction 3-sulfino-L-alanine + 2-oxoglutarate = 3-sulfinopyruvate + L-glutamate. Its function is as follows. Biosynthesis of L-glutamate from L-aspartate or L-cysteine. Important regulator of levels of glutamate, the major excitatory neurotransmitter of the vertebrate central nervous system. Acts as a scavenger of glutamate in brain neuroprotection. The aspartate aminotransferase activity is involved in hepatic glucose synthesis during development and in adipocyte glyceroneogenesis. Using L-cysteine as substrate, regulates levels of mercaptopyruvate, an important source of hydrogen sulfide. Mercaptopyruvate is converted into H(2)S via the action of 3-mercaptopyruvate sulfurtransferase (3MST). Hydrogen sulfide is an important synaptic modulator and neuroprotectant in the brain. In addition, catalyzes (2S)-2-aminobutanoate, a by-product in the cysteine biosynthesis pathway. The sequence is that of Aspartate aminotransferase, cytoplasmic from Homo sapiens (Human).